Reading from the N-terminus, the 149-residue chain is UPF0178 protein Cphy_3042 (149 aa).

A compositionally biased stretch (basic residues) spans 112–128; that stretch reads QRRHGKQNLHSKNNKKR. Residues 112–132 are disordered; sequence QRRHGKQNLHSKNNKKRTTGD.

The protein belongs to the UPF0178 family.

This chain is UPF0178 protein Cphy_3042, found in Lachnoclostridium phytofermentans (strain ATCC 700394 / DSM 18823 / ISDg) (Clostridium phytofermentans).